We begin with the raw amino-acid sequence, 252 residues long: Probable aquaporin TIP1-2 (252 aa).

The next 2 membrane-spanning stretches (helical) occupy residues 24-44 and 57-77; these read VAEF…GMAF and GLIA…AVGA. An NPA 1 motif is present at residues 85 to 87; it reads NPA. Helical transmembrane passes span 115 to 137, 144 to 164, and 173 to 193; these read VVAC…SLSA, AVVF…ATAV, and VIAP…GGAF. Positions 199 to 201 match the NPA 2 motif; sequence NPA. The chain crosses the membrane as a helical span at residues 220–240; it reads WLGPFVGAAIAALIYDIIFIG.

The protein belongs to the MIP/aquaporin (TC 1.A.8) family. TIP (TC 1.A.8.10) subfamily. As to expression, expressed in leaves.

It localises to the vacuole membrane. Aquaporins facilitate the transport of water and small neutral solutes across cell membranes. May be involved in transport from the vacuolar compartment to the cytoplasm. The chain is Probable aquaporin TIP1-2 (TIP1-2) from Oryza sativa subsp. japonica (Rice).